The primary structure comprises 123 residues: MDHKKTSIRTTALAALVLGAVAAPAFSAPVDQATYNGFKIYKQQRCETCHGATGEGSAAFPNLLNSLKNLSKDQFKEVVLKGRNAMPPFEANKKVAEGIDDLYTYIKGRSDGTVPAGELEKPQ.

The N-terminal stretch at 1–27 is a signal peptide; it reads MDHKKTSIRTTALAALVLGAVAAPAFS. Residues Cys-46, Cys-49, His-50, and Met-86 each contribute to the heme c site.

Post-translationally, binds 1 heme c group covalently per subunit.

In Methylococcus capsulatus (strain ATCC 33009 / NCIMB 11132 / Bath), this protein is Cytochrome c-555.